Reading from the N-terminus, the 128-residue chain is Otoraplin (128 aa).

A signal peptide spans 1-18 (MARILILLLGGLVVLCAG). Intrachain disulfides connect cysteine 32/cysteine 37 and cysteine 55/cysteine 127. Residues 39 to 110 (YTISLARAQE…PSNLVKEQRV (72 aa)) enclose the SH3 domain.

Belongs to the MIA/OTOR family. Highly expressed in cochlea.

It is found in the secreted. The protein is Otoraplin (Otor) of Mus musculus (Mouse).